The sequence spans 620 residues: Membrane protein insertase YidC (620 aa).

A helical membrane pass occupies residues 7-27 (NYLIAIALSVMVVLGWQFFYM). The segment covering 37–58 (AEQAQQAQQAKTPATQATPGAA) has biased composition (low complexity). Residues 37–77 (AEQAQQAQQAKTPATQATPGAAVNGALPGQTQASATTSRED) form a disordered region. 4 helical membrane-spanning segments follow: residues 399–419 (FGVA…PLAS), 469–489 (WPLL…YITI), 514–534 (LFGL…WPII), and 560–580 (WMPL…VIYW).

It belongs to the OXA1/ALB3/YidC family. Type 1 subfamily. As to quaternary structure, interacts with the Sec translocase complex via SecD. Specifically interacts with transmembrane segments of nascent integral membrane proteins during membrane integration.

It is found in the cell inner membrane. Its function is as follows. Required for the insertion and/or proper folding and/or complex formation of integral membrane proteins into the membrane. Involved in integration of membrane proteins that insert both dependently and independently of the Sec translocase complex, as well as at least some lipoproteins. Aids folding of multispanning membrane proteins. The sequence is that of Membrane protein insertase YidC from Allorhizobium ampelinum (strain ATCC BAA-846 / DSM 112012 / S4) (Agrobacterium vitis (strain S4)).